The primary structure comprises 350 residues: Holliday junction branch migration complex subunit RuvB (350 aa).

Residues 1-22 (MDHTASLSPVRPEAQPTDDRER) are disordered. The segment at 1 to 185 (MDHTASLSPV…FGIVERFEFY (185 aa)) is large ATPase domain (RuvB-L). Residues Leu24, Arg25, Gly66, Lys69, Thr70, Thr71, 132 to 134 (EDY), Arg175, Tyr185, and Arg222 each bind ATP. Thr70 contributes to the Mg(2+) binding site. The interval 186 to 256 (TPEELAAIVQ…IVRAGLAHLK (71 aa)) is small ATPAse domain (RuvB-S). The tract at residues 259-350 (ELGLELHDIQ…PHSPEQGTLL (92 aa)) is head domain (RuvB-H). 2 residues coordinate DNA: Arg314 and Arg319.

The protein belongs to the RuvB family. As to quaternary structure, homohexamer. Forms an RuvA(8)-RuvB(12)-Holliday junction (HJ) complex. HJ DNA is sandwiched between 2 RuvA tetramers; dsDNA enters through RuvA and exits via RuvB. An RuvB hexamer assembles on each DNA strand where it exits the tetramer. Each RuvB hexamer is contacted by two RuvA subunits (via domain III) on 2 adjacent RuvB subunits; this complex drives branch migration. In the full resolvosome a probable DNA-RuvA(4)-RuvB(12)-RuvC(2) complex forms which resolves the HJ.

The protein resides in the cytoplasm. It catalyses the reaction ATP + H2O = ADP + phosphate + H(+). The RuvA-RuvB-RuvC complex processes Holliday junction (HJ) DNA during genetic recombination and DNA repair, while the RuvA-RuvB complex plays an important role in the rescue of blocked DNA replication forks via replication fork reversal (RFR). RuvA specifically binds to HJ cruciform DNA, conferring on it an open structure. The RuvB hexamer acts as an ATP-dependent pump, pulling dsDNA into and through the RuvAB complex. RuvB forms 2 homohexamers on either side of HJ DNA bound by 1 or 2 RuvA tetramers; 4 subunits per hexamer contact DNA at a time. Coordinated motions by a converter formed by DNA-disengaged RuvB subunits stimulates ATP hydrolysis and nucleotide exchange. Immobilization of the converter enables RuvB to convert the ATP-contained energy into a lever motion, pulling 2 nucleotides of DNA out of the RuvA tetramer per ATP hydrolyzed, thus driving DNA branch migration. The RuvB motors rotate together with the DNA substrate, which together with the progressing nucleotide cycle form the mechanistic basis for DNA recombination by continuous HJ branch migration. Branch migration allows RuvC to scan DNA until it finds its consensus sequence, where it cleaves and resolves cruciform DNA. This Treponema pallidum (strain Nichols) protein is Holliday junction branch migration complex subunit RuvB.